A 103-amino-acid polypeptide reads, in one-letter code: MSGRGKGGKGLGKGGAKRHRKILRDNIQGITKPAIRRLARRGGVKRISALIYEETRSVLKTFLESVIRDAVTYTEHAKRKTVTSLDVVYALKRQGRTLYGFGG.

At Lys6 the chain carries N6-acetyl-N6-methyllysine; alternate. Lys6, Lys9, and Lys13 each carry N6-methyllysine; alternate. Lys13 is subject to N6-acetyl-N6-methyllysine; alternate. Residues 17-21 (KRHRK) mediate DNA binding. N6-glutaryllysine is present on Lys92.

It belongs to the histone H4 family. The nucleosome is a histone octamer containing two molecules each of H2A, H2B, H3 and H4 assembled in one H3-H4 heterotetramer and two H2A-H2B heterodimers. The octamer wraps approximately 147 bp of DNA. Post-translationally, glutarylation at Lys-92 (H4K91glu) destabilizes nucleosomes by promoting dissociation of the H2A-H2B dimers from nucleosomes.

The protein localises to the nucleus. It localises to the chromosome. In terms of biological role, core component of nucleosome. Nucleosomes wrap and compact DNA into chromatin, limiting DNA accessibility to the cellular machineries which require DNA as a template. Histones thereby play a central role in transcription regulation, DNA repair, DNA replication and chromosomal stability. DNA accessibility is regulated via a complex set of post-translational modifications of histones, also called histone code, and nucleosome remodeling. In Blastobotrys adeninivorans (Yeast), this protein is Histone H4 (ahsb4).